We begin with the raw amino-acid sequence, 110 residues long: Spermatid nuclear transition protein 3 (110 aa).

Residues 80–110 (RSCAREKLNQSRKRYQNMRQSQRRGQNQKRR) are disordered.

It localises to the nucleus. Its subcellular location is the chromosome. In terms of biological role, involved in nuclear basic protein transition: histones are replaced by spermatid specific proteins which are themselves replaced by protamines in late spermatids. This is Spermatid nuclear transition protein 3 from Ovis aries (Sheep).